A 193-amino-acid chain; its full sequence is uncharacterized protein (193 aa).

This is an uncharacterized protein from Archaeoglobus fulgidus (strain ATCC 49558 / DSM 4304 / JCM 9628 / NBRC 100126 / VC-16).